Here is an 83-residue protein sequence, read N- to C-terminus: Gene 41 protein (83 aa).

This is Gene 41 protein (41) from Mycobacterium phage L5 (Mycobacteriophage L5).